The following is a 567-amino-acid chain: Probable transport protein (567 aa).

The segment covering 1–30 has biased composition (basic and acidic residues); sequence MSDRVEVNERRSDSVSEKEPARDDARKDVT. The disordered stretch occupies residues 1–38; that stretch reads MSDRVEVNERRSDSVSEKEPARDDARKDVTDDQEDAPP. At 1 to 46 the chain is on the cytoplasmic side; that stretch reads MSDRVEVNERRSDSVSEKEPARDDARKDVTDDQEDAPPFMTANNAR. The chain crosses the membrane as a helical span at residues 47–67; sequence VMLVQAIGGSLNGYSIGFVGV. Over 68–160 the chain is Extracellular; the sequence is YSTLFGYSTN…PSGYSSSESG (93 aa). Residues 161 to 181 traverse the membrane as a helical segment; that stretch reads IFAGSMIAGCLIGSVFAGPLA. Over 182–189 the chain is Cytoplasmic; that stretch reads SKIGARLS. The helical transmembrane segment at 190-210 threads the bilayer; the sequence is FLLVGLVGVVASVMYHASCAA. At 211 to 212 the chain is on the extracellular side; the sequence is DE. Residues 213–233 traverse the membrane as a helical segment; it reads FWVLIVGRFVIGLFLGVICVA. Residues 234–249 lie on the Cytoplasmic side of the membrane; that stretch reads CPVYTDQNAHPKWKRT. Residues 250-270 form a helical membrane-spanning segment; the sequence is IGVMFQVFTTLGIFVAALMGL. The Extracellular portion of the chain corresponds to 271–289; that stretch reads ALGQSIRFDHDGDQKVMAR. A helical membrane pass occupies residues 290 to 310; sequence MQGLCVFSTLFSLLTVVLGIV. Residues 311 to 341 lie on the Cytoplasmic side of the membrane; the sequence is TRESRAKFDGGEEGRAELNPSEYGYVEMIPR. A helical membrane pass occupies residues 342–362; the sequence is LLMGCVMAGTLQLTGINAVMN. The Extracellular portion of the chain corresponds to 363-366; it reads YAPT. The helical transmembrane segment at 367–387 threads the bilayer; the sequence is IMGSLGLAPLVGNFVVMLWNF. Topologically, residues 388–404 are cytoplasmic; sequence VTTLASIPLSYVFTMRH. Residues 405–425 traverse the membrane as a helical segment; that stretch reads VFLFGSIFTSCMCLFMCGIPV. Topologically, residues 426 to 437 are extracellular; the sequence is YPGVSKKLEAKN. Residues 438-458 traverse the membrane as a helical segment; the sequence is GVAITGILLFILGFEVCVGPC. The Cytoplasmic segment spans residues 459-480; the sequence is YYVLTQDMFPPSFRPRGASFTQ. Residues 481-501 traverse the membrane as a helical segment; that stretch reads VAQFIFNLIINVCYPIATESI. Over 502–514 the chain is Extracellular; sequence SGGPSGNQDKGQA. Residues 515–535 form a helical membrane-spanning segment; the sequence is VAFIFFGGLGLICFVIQVFFL. Over 536-567 the chain is Cytoplasmic; it reads HPWDEERDGKKVVAPAIGKKELSEESIGNRAE.

It belongs to the major facilitator superfamily. Sugar transporter (TC 2.A.1.1) family.

The protein localises to the membrane. Its function is as follows. Probable membrane transport protein. The chain is Probable transport protein (PRO-1) from Leishmania enriettii.